The following is a 150-amino-acid chain: Ribosome maturation factor RimP (150 aa).

The protein belongs to the RimP family.

It localises to the cytoplasm. Functionally, required for maturation of 30S ribosomal subunits. The polypeptide is Ribosome maturation factor RimP (Thermotoga petrophila (strain ATCC BAA-488 / DSM 13995 / JCM 10881 / RKU-1)).